We begin with the raw amino-acid sequence, 239 residues long: Tumor necrosis factor ligand superfamily member 14 (239 aa).

Residues 1–37 (MESVVQPSVFVVDGQTDIPFRRLEQNHRRRRCGTVQV) lie on the Cytoplasmic side of the membrane. Residues 38–58 (SLALVLLLGAGLATQGWFLLR) form a helical; Signal-anchor for type II membrane protein membrane-spanning segment. Residues 59-239 (LHQRLGDIVA…TRSYFGAFMV (181 aa)) lie on the Extracellular side of the membrane. The region spanning 92–239 (PAAHLTGANA…TRSYFGAFMV (148 aa)) is the THD domain. N-linked (GlcNAc...) asparagine glycosylation is present at asparagine 100. Cysteine 152 and cysteine 187 are disulfide-bonded. N-linked (GlcNAc...) asparagine glycosylation occurs at asparagine 191.

It belongs to the tumor necrosis factor family. Homotrimer. Interacts with TNFRSF14. In terms of processing, the soluble form derives from the membrane form by proteolytic processing.

Its subcellular location is the cell membrane. It localises to the secreted. Cytokine that binds to TNFRSF3/LTBR. Binding to the decoy receptor TNFRSF6B modulates its effects. Activates NFKB and stimulates the proliferation of T-cells. Acts as a ligand for TNFRSF14/HVEM. Upon binding to TNFRSF14/HVEM, delivers costimulatory signals to T cells, leading to T cell proliferation and IFNG production. The chain is Tumor necrosis factor ligand superfamily member 14 (Tnfsf14) from Mus musculus (Mouse).